We begin with the raw amino-acid sequence, 238 residues long: 2-C-methyl-D-erythritol 4-phosphate cytidylyltransferase (238 aa).

The protein belongs to the IspD/TarI cytidylyltransferase family. IspD subfamily.

The catalysed reaction is 2-C-methyl-D-erythritol 4-phosphate + CTP + H(+) = 4-CDP-2-C-methyl-D-erythritol + diphosphate. It functions in the pathway isoprenoid biosynthesis; isopentenyl diphosphate biosynthesis via DXP pathway; isopentenyl diphosphate from 1-deoxy-D-xylulose 5-phosphate: step 2/6. Its function is as follows. Catalyzes the formation of 4-diphosphocytidyl-2-C-methyl-D-erythritol from CTP and 2-C-methyl-D-erythritol 4-phosphate (MEP). This is 2-C-methyl-D-erythritol 4-phosphate cytidylyltransferase from Shewanella amazonensis (strain ATCC BAA-1098 / SB2B).